The following is a 607-amino-acid chain: Elongation factor 4 (607 aa).

The tr-type G domain occupies 11 to 193; the sequence is EKIRNFSIIA…QIVEKVPAPQ (183 aa). Residues 23–28 and 140–143 contribute to the GTP site; these read DHGKST and NKID.

Belongs to the TRAFAC class translation factor GTPase superfamily. Classic translation factor GTPase family. LepA subfamily.

The protein localises to the cell membrane. The enzyme catalyses GTP + H2O = GDP + phosphate + H(+). Functionally, required for accurate and efficient protein synthesis under certain stress conditions. May act as a fidelity factor of the translation reaction, by catalyzing a one-codon backward translocation of tRNAs on improperly translocated ribosomes. Back-translocation proceeds from a post-translocation (POST) complex to a pre-translocation (PRE) complex, thus giving elongation factor G a second chance to translocate the tRNAs correctly. Binds to ribosomes in a GTP-dependent manner. The chain is Elongation factor 4 from Lactococcus lactis subsp. cremoris (strain SK11).